The sequence spans 229 residues: Orotidine 5'-phosphate decarboxylase (229 aa).

Substrate is bound by residues aspartate 10, lysine 32, 59–68 (DLKFHDIPNT), threonine 119, arginine 180, glutamine 189, glycine 209, and arginine 210. The active-site Proton donor is the lysine 61.

Belongs to the OMP decarboxylase family. Type 1 subfamily. Homodimer.

It catalyses the reaction orotidine 5'-phosphate + H(+) = UMP + CO2. Its pathway is pyrimidine metabolism; UMP biosynthesis via de novo pathway; UMP from orotate: step 2/2. In terms of biological role, catalyzes the decarboxylation of orotidine 5'-monophosphate (OMP) to uridine 5'-monophosphate (UMP). The sequence is that of Orotidine 5'-phosphate decarboxylase from Legionella pneumophila (strain Paris).